A 150-amino-acid polypeptide reads, in one-letter code: Ribosomal RNA large subunit methyltransferase H (150 aa).

S-adenosyl-L-methionine-binding positions include A100 and 118 to 123 (LSEMTF).

Belongs to the RNA methyltransferase RlmH family. In terms of assembly, homodimer.

The protein localises to the cytoplasm. It catalyses the reaction pseudouridine(1915) in 23S rRNA + S-adenosyl-L-methionine = N(3)-methylpseudouridine(1915) in 23S rRNA + S-adenosyl-L-homocysteine + H(+). Its function is as follows. Specifically methylates the pseudouridine at position 1915 (m3Psi1915) in 23S rRNA. The protein is Ribosomal RNA large subunit methyltransferase H of Helicobacter pylori (strain P12).